We begin with the raw amino-acid sequence, 464 residues long: tRNA-2-methylthio-N(6)-dimethylallyladenosine synthase (464 aa).

The MTTase N-terminal domain maps to 19–135 (GSYWITTFGC…LENLLERVDL (117 aa)). [4Fe-4S] cluster is bound by residues Cys-28, Cys-64, Cys-98, Cys-170, Cys-174, and Cys-177. The Radical SAM core domain maps to 156–393 (RDSSICGWVN…NELVETTSRK (238 aa)). In terms of domain architecture, TRAM spans 396–464 (QRYLNNIESV…SFSLSGQIYK (69 aa)).

It belongs to the methylthiotransferase family. MiaB subfamily. As to quaternary structure, monomer. Requires [4Fe-4S] cluster as cofactor.

It localises to the cytoplasm. The enzyme catalyses N(6)-dimethylallyladenosine(37) in tRNA + (sulfur carrier)-SH + AH2 + 2 S-adenosyl-L-methionine = 2-methylsulfanyl-N(6)-dimethylallyladenosine(37) in tRNA + (sulfur carrier)-H + 5'-deoxyadenosine + L-methionine + A + S-adenosyl-L-homocysteine + 2 H(+). In terms of biological role, catalyzes the methylthiolation of N6-(dimethylallyl)adenosine (i(6)A), leading to the formation of 2-methylthio-N6-(dimethylallyl)adenosine (ms(2)i(6)A) at position 37 in tRNAs that read codons beginning with uridine. This is tRNA-2-methylthio-N(6)-dimethylallyladenosine synthase from Prochlorococcus marinus subsp. pastoris (strain CCMP1986 / NIES-2087 / MED4).